The primary structure comprises 232 residues: tRNA (guanine-N(1)-)-methyltransferase (232 aa).

Residues glycine 114 and 134 to 139 contribute to the S-adenosyl-L-methionine site; that span reads IGDYIL.

It belongs to the RNA methyltransferase TrmD family. Homodimer.

Its subcellular location is the cytoplasm. The catalysed reaction is guanosine(37) in tRNA + S-adenosyl-L-methionine = N(1)-methylguanosine(37) in tRNA + S-adenosyl-L-homocysteine + H(+). Functionally, specifically methylates guanosine-37 in various tRNAs. This Wolbachia pipientis subsp. Culex pipiens (strain wPip) protein is tRNA (guanine-N(1)-)-methyltransferase.